The primary structure comprises 997 residues: Kinesin-like protein KIF19 (997 aa).

Residues 11 to 346 (QLMVALRVRP…LTYAGRAKNI (336 aa)) form the Kinesin motor domain. Residue 104 to 111 (GPTGCGKT) participates in ATP binding. The stretch at 361–388 (IAQYTSIIADLRGEIQRLKCKIDQQAGR) forms a coiled coil. Positions 477–494 (EERRKESYTKEDSEKDSD) are enriched in basic and acidic residues. 4 disordered regions span residues 477–509 (EERR…EVAS), 665–704 (KITP…GTDS), 718–759 (QVKS…SSEN), and 784–997 (AAQR…LQHN). Residues 506-551 (EVASARENIAALVGEQKKLRKEKLALEQRCRELRARGRRLEETLPR) are a coiled coil. The span at 683 to 697 (KTLSSEAQRPQNNTL) shows a compositional bias: polar residues. The span at 750-759 (INSSPESSEN) shows a compositional bias: low complexity. Composition is skewed to polar residues over residues 835 to 851 (TLQH…STGE) and 950 to 959 (PNQNTGSGNP).

It belongs to the TRAFAC class myosin-kinesin ATPase superfamily. Kinesin family. As to expression, strongly expressed in the oviduct and trachea. Expressed in testis, lung, ovary and brain.

The protein resides in the cytoplasm. It is found in the cytoskeleton. The protein localises to the cell projection. Its subcellular location is the cilium. Functionally, plus end-directed microtubule-dependent motor protein that regulates the length of motile cilia by mediating depolymerization of microtubules at ciliary tips. The polypeptide is Kinesin-like protein KIF19 (Kif19) (Mus musculus (Mouse)).